Consider the following 21-residue polypeptide: MYIFITHFFTEYVILKYLLPI.

This is an uncharacterized protein from Escherichia coli (strain K12).